The chain runs to 1389 residues: DNA-directed RNA polymerase subunit beta (1389 aa).

The protein belongs to the RNA polymerase beta chain family. In plastids the minimal PEP RNA polymerase catalytic core is composed of four subunits: alpha, beta, beta', and beta''. When a (nuclear-encoded) sigma factor is associated with the core the holoenzyme is formed, which can initiate transcription.

The protein resides in the plastid. It localises to the chloroplast. The catalysed reaction is RNA(n) + a ribonucleoside 5'-triphosphate = RNA(n+1) + diphosphate. Functionally, DNA-dependent RNA polymerase catalyzes the transcription of DNA into RNA using the four ribonucleoside triphosphates as substrates. The chain is DNA-directed RNA polymerase subunit beta from Phaeodactylum tricornutum (strain CCAP 1055/1).